A 141-amino-acid chain; its full sequence is Large ribosomal subunit protein uL11 (141 aa).

Belongs to the universal ribosomal protein uL11 family. In terms of assembly, part of the ribosomal stalk of the 50S ribosomal subunit. Interacts with L10 and the large rRNA to form the base of the stalk. L10 forms an elongated spine to which L12 dimers bind in a sequential fashion forming a multimeric L10(L12)X complex. In terms of processing, one or more lysine residues are methylated.

Functionally, forms part of the ribosomal stalk which helps the ribosome interact with GTP-bound translation factors. This is Large ribosomal subunit protein uL11 from Kosmotoga olearia (strain ATCC BAA-1733 / DSM 21960 / TBF 19.5.1).